The following is a 508-amino-acid chain: Photosystem II CP47 reaction center protein (508 aa).

6 helical membrane-spanning segments follow: residues 21–36 (SVHIMHTALVSGWAGS), 101–115 (IVFSGLCFLASIWHW), 140–156 (GIHLFLSGVACFGFGAF), 203–218 (IAAGTLGILAGLFHLS), 237–252 (VLSSSIAAVFFAAFIV), and 457–472 (SFALLFFFGHIWHGAR).

This sequence belongs to the PsbB/PsbC family. PsbB subfamily. As to quaternary structure, PSII is composed of 1 copy each of membrane proteins PsbA, PsbB, PsbC, PsbD, PsbE, PsbF, PsbH, PsbI, PsbJ, PsbK, PsbL, PsbM, PsbT, PsbX, PsbY, PsbZ, Psb30/Ycf12, at least 3 peripheral proteins of the oxygen-evolving complex and a large number of cofactors. It forms dimeric complexes. Binds multiple chlorophylls. PSII binds additional chlorophylls, carotenoids and specific lipids. serves as cofactor.

The protein resides in the plastid. The protein localises to the chloroplast thylakoid membrane. In terms of biological role, one of the components of the core complex of photosystem II (PSII). It binds chlorophyll and helps catalyze the primary light-induced photochemical processes of PSII. PSII is a light-driven water:plastoquinone oxidoreductase, using light energy to abstract electrons from H(2)O, generating O(2) and a proton gradient subsequently used for ATP formation. In Amborella trichopoda, this protein is Photosystem II CP47 reaction center protein.